The chain runs to 189 residues: dCTP deaminase (189 aa).

Residues 112 to 117 (KSTYAR), 136 to 138 (TLE), glutamine 157, tyrosine 171, and glutamine 181 each bind dCTP. Residue glutamate 138 is the Proton donor/acceptor of the active site.

The protein belongs to the dCTP deaminase family. Homotrimer.

It catalyses the reaction dCTP + H2O + H(+) = dUTP + NH4(+). The protein operates within pyrimidine metabolism; dUMP biosynthesis; dUMP from dCTP (dUTP route): step 1/2. In terms of biological role, catalyzes the deamination of dCTP to dUTP. The sequence is that of dCTP deaminase from Alcanivorax borkumensis (strain ATCC 700651 / DSM 11573 / NCIMB 13689 / SK2).